The following is a 221-amino-acid chain: Glutathione S-transferase Z1 (221 aa).

One can recognise a GST N-terminal domain in the interval 7–88; it reads EKLKLYSYWR…YLDEKYPEPP (82 aa). Glutathione-binding positions include 17 to 18, 17 to 22, Gln46, 46 to 47, 59 to 60, Val60, 72 to 73, Gln112, and 116 to 118; these read SS, SSCAHR, QF, TV, DS, and NLA. Positions 93–218 constitute a GST C-terminal domain; that stretch reads DLHKRAVNYQ…LPEKQPDAPS (126 aa).

This sequence belongs to the GST superfamily. Zeta family. Homodimer.

It localises to the cytoplasm. The protein localises to the cytosol. The enzyme catalyses RX + glutathione = an S-substituted glutathione + a halide anion + H(+). In terms of biological role, acts a maleylacetone isomerase. Also catalyzes the glutathione-dependent dehalogenation of dichloroacetic acid to glyoxylic acid. In vitro, possesses glutathione peroxidase activity toward cumene hydroperoxide and linoleic acid-13-hydroperoxide. The protein is Glutathione S-transferase Z1 (GSTZ1) of Arabidopsis thaliana (Mouse-ear cress).